Here is a 173-residue protein sequence, read N- to C-terminus: NADH-quinone oxidoreductase subunit B (173 aa).

[4Fe-4S] cluster is bound by residues cysteine 52, cysteine 53, cysteine 117, and cysteine 147.

Belongs to the complex I 20 kDa subunit family. As to quaternary structure, NDH-1 is composed of 14 different subunits. Subunits NuoB, C, D, E, F, and G constitute the peripheral sector of the complex. It depends on [4Fe-4S] cluster as a cofactor.

The protein resides in the cell inner membrane. It carries out the reaction a quinone + NADH + 5 H(+)(in) = a quinol + NAD(+) + 4 H(+)(out). NDH-1 shuttles electrons from NADH, via FMN and iron-sulfur (Fe-S) centers, to quinones in the respiratory chain. Couples the redox reaction to proton translocation (for every two electrons transferred, four hydrogen ions are translocated across the cytoplasmic membrane), and thus conserves the redox energy in a proton gradient. The sequence is that of NADH-quinone oxidoreductase subunit B from Pelagibacter ubique (strain HTCC1062).